Here is a 578-residue protein sequence, read N- to C-terminus: Zinc finger protein with KRAB and SCAN domains 8 (578 aa).

Positions 1 to 20 are disordered; that stretch reads MAEESRKPSAPSPPDQTPEE. Serine 12 carries the post-translational modification Phosphoserine. Residue lysine 26 forms a Glycyl lysine isopeptide (Lys-Gly) (interchain with G-Cter in SUMO2) linkage. Positions 51 to 133 constitute an SCAN box domain; it reads RLRFRQLCYQ…TLLEDLERQI (83 aa). A disordered region spans residues 158 to 205; the sequence is ASAPEPPNTQLQSEATQHKSPVPQESQERAMSTSQSPTRSQKGSSGDQ. Over residues 165-205 the composition is skewed to polar residues; the sequence is NTQLQSEATQHKSPVPQESQERAMSTSQSPTRSQKGSSGDQ. Glycyl lysine isopeptide (Lys-Gly) (interchain with G-Cter in SUMO2) cross-links involve residues lysine 176 and lysine 199. Serine 201 carries the post-translational modification Phosphoserine. The KRAB domain maps to 220–316; sequence EKIEDMAVSL…GRLERQRGNP (97 aa). Residues lysine 221, lysine 272, and lysine 288 each participate in a glycyl lysine isopeptide (Lys-Gly) (interchain with G-Cter in SUMO2) cross-link. 2 consecutive C2H2-type zinc fingers follow at residues 322–344 and 350–372; these read HKCD…WRIH and YQCN…QDIH. Residues lysine 374 and lysine 376 each participate in a glycyl lysine isopeptide (Lys-Gly) (interchain with G-Cter in SUMO2) cross-link. C2H2-type zinc fingers lie at residues 378 to 400, 406 to 428, 434 to 456, 462 to 484, 490 to 512, 518 to 540, and 546 to 568; these read YHCK…QRIH, YQCN…QRIH, YECN…QRIH, YECD…QRSH, YKCN…QRIH, and YKCK…LRIH. Glycyl lysine isopeptide (Lys-Gly) (interchain with G-Cter in SUMO2) cross-links involve residues lysine 413 and lysine 441. Lysine 502 participates in a covalent cross-link: Glycyl lysine isopeptide (Lys-Gly) (interchain with G-Cter in SUMO2). Lysine 572 is covalently cross-linked (Glycyl lysine isopeptide (Lys-Gly) (interchain with G-Cter in SUMO2)).

It belongs to the krueppel C2H2-type zinc-finger protein family.

It is found in the nucleus. May be involved in transcriptional regulation. This chain is Zinc finger protein with KRAB and SCAN domains 8 (ZKSCAN8), found in Pan troglodytes (Chimpanzee).